We begin with the raw amino-acid sequence, 372 residues long: Chaperone protein DnaJ (372 aa).

The J domain maps to 5–70 (DYYELLEISR…EKKSIYDRYG (66 aa)). The CR-type zinc finger occupies 134–211 (GCNKEINYKY…CKGTGYEEVK (78 aa)). Zn(2+) contacts are provided by C147, C150, C163, C166, C185, C188, C199, and C202. 4 CXXCXGXG motif repeats span residues 147–154 (CKPCEGTG), 163–170 (CPTCKGQG), 185–192 (CPRCGGTG), and 199–206 (CKSCKGTG).

It belongs to the DnaJ family. As to quaternary structure, homodimer. It depends on Zn(2+) as a cofactor.

It localises to the cytoplasm. Participates actively in the response to hyperosmotic and heat shock by preventing the aggregation of stress-denatured proteins and by disaggregating proteins, also in an autonomous, DnaK-independent fashion. Unfolded proteins bind initially to DnaJ; upon interaction with the DnaJ-bound protein, DnaK hydrolyzes its bound ATP, resulting in the formation of a stable complex. GrpE releases ADP from DnaK; ATP binding to DnaK triggers the release of the substrate protein, thus completing the reaction cycle. Several rounds of ATP-dependent interactions between DnaJ, DnaK and GrpE are required for fully efficient folding. Also involved, together with DnaK and GrpE, in the DNA replication of plasmids through activation of initiation proteins. This Aliarcobacter butzleri (strain RM4018) (Arcobacter butzleri) protein is Chaperone protein DnaJ.